Here is a 66-residue protein sequence, read N- to C-terminus: Small ribosomal subunit protein bS21B (66 aa).

Residues 38–66 (YVKPTQKRKIAKKAAISKAKKEARRSYSY) form a disordered region.

The protein belongs to the bacterial ribosomal protein bS21 family.

The protein is Small ribosomal subunit protein bS21B of Francisella tularensis subsp. tularensis (strain SCHU S4 / Schu 4).